Here is a 228-residue protein sequence, read N- to C-terminus: Calcyclin-binding protein (228 aa).

N-acetylalanine is present on Ala-2. The interaction with SIAH1 stretch occupies residues 2 to 80 (ASEELQKDLE…YTVKISNYGW (79 aa)). Ser-3 is subject to Phosphoserine. An N6-acetyllysine mark is found at Lys-8 and Lys-19. Residue Ser-34 is modified to Phosphoserine. The 95-residue stretch at 73–167 (VKISNYGWDQ…VENTRWDYLT (95 aa)) folds into the CS domain. Residues 73–228 (VKISNYGWDQ…EKQAKGDTEF (156 aa)) are interaction with SKP1. 2 positions are modified to N6-acetyllysine: Lys-85 and Lys-118. The interval 154-228 (CRKKVENTRW…EKQAKGDTEF (75 aa)) is interaction with S100A6. Residues 168-228 (QVEKECKEKE…EKQAKGDTEF (61 aa)) enclose the SGS domain.

In terms of assembly, component of some large E3 complex at least composed of UBE2D1, SIAH1, CACYBP/SIP, SKP1, APC and TBL1X. Interacts directly with SIAH1, SIAH2 and SKP1. Interacts with protein of the S100 family S100A1, S100A6, S100B, S100P and S100A12 in a calcium-dependent manner. Post-translationally, phosphorylated on serine residues. Phosphorylated upon induction by RA or at high calcium concentrations.

It localises to the nucleus. It is found in the cytoplasm. In terms of biological role, may be involved in calcium-dependent ubiquitination and subsequent proteasomal degradation of target proteins. Probably serves as a molecular bridge in ubiquitin E3 complexes. Participates in the ubiquitin-mediated degradation of beta-catenin (CTNNB1). This is Calcyclin-binding protein (CACYBP) from Macaca fascicularis (Crab-eating macaque).